Consider the following 1209-residue polypeptide: Major DNA-binding protein (1209 aa).

The interval 290–312 (NAGKGSGRAQRQGDGSGSKNSAS) is disordered. Residues 503-516 (CGLCNQATRPACAH) fold into a zinc finger. The short motif at 849-850 (FW) is the Required for filament formation element. The interval 1182-1209 (QKRSLPDDILFDMGAPPEKKSGLTFDML) is required for nuclear localization.

It belongs to the herpesviridae major DNA-binding protein family. As to quaternary structure, homooligomers. Forms double-helical filaments necessary for the formation of replication compartments within the host nucleus. Interacts with the origin-binding protein. Interacts with the helicase primase complex; this interaction stimulates primer synthesis activity of the helicase-primase complex. Interacts with the DNA polymerase. Interacts with the alkaline exonuclease; this interaction increases its nuclease processivity.

It localises to the host nucleus. Its function is as follows. Plays several crucial roles in viral infection. Participates in the opening of the viral DNA origin to initiate replication by interacting with the origin-binding protein. May disrupt loops, hairpins and other secondary structures present on ssDNA to reduce and eliminate pausing of viral DNA polymerase at specific sites during elongation. Promotes viral DNA recombination by performing strand-transfer, characterized by the ability to transfer a DNA strand from a linear duplex to a complementary single-stranded DNA circle. Can also catalyze the renaturation of complementary single strands. Additionally, reorganizes the host cell nucleus, leading to the formation of prereplicative sites and replication compartments. This process is driven by the protein which can form double-helical filaments in the absence of DNA. In Equine herpesvirus 1 (strain Ab4p) (EHV-1), this protein is Major DNA-binding protein.